A 122-amino-acid polypeptide reads, in one-letter code: UPF0102 protein Krad_1407 (122 aa).

This sequence belongs to the UPF0102 family.

This chain is UPF0102 protein Krad_1407, found in Kineococcus radiotolerans (strain ATCC BAA-149 / DSM 14245 / SRS30216).